The following is a 457-amino-acid chain: Metacaspase-1 (457 aa).

The segment at methionine 1–serine 149 is disordered. The segment covering proline 7–glycine 18 has biased composition (gly residues). Positions arginine 20–glutamine 56 are enriched in pro residues. Residues glutamine 57–tyrosine 83 show a composition bias toward low complexity. Active-site residues include histidine 247 and cysteine 303.

Belongs to the peptidase C14B family.

Its function is as follows. Involved in cell death (apoptosis). The polypeptide is Metacaspase-1 (MCA1) (Cryptococcus neoformans var. neoformans serotype D (strain JEC21 / ATCC MYA-565) (Filobasidiella neoformans)).